Consider the following 1058-residue polypeptide: Ubiquitin-like modifier-activating enzyme 1 (1058 aa).

A disordered region spans residues 1–46 (MSSSPLSKKRRVSGPDPKPGSNCSPAQSALSEVSSVPTNGMAKNGS). The residue at position 2 (serine 2) is an N-acetylserine. Residues serine 4, serine 13, serine 21, serine 24, and serine 46 each carry the phosphoserine modification. The segment covering 21 to 38 (SNCSPAQSALSEVSSVPT) has biased composition (polar residues). At tyrosine 55 the chain carries Phosphotyrosine. A run of 2 repeats spans residues 63-199 (GHEA…GQLF) and 459-611 (GSDF…QVVI). The 2 approximate repeats stretch occupies residues 63–611 (GHEAMKMLQT…GTKGNVQVVI (549 aa)). ATP contacts are provided by residues alanine 478, aspartate 504, arginine 515, lysine 528, and 576–577 (DN). Lysine 528 carries the post-translational modification N6-succinyllysine. Cysteine 632 acts as the Glycyl thioester intermediate in catalysis. An N6-acetyllysine modification is found at lysine 671. Residue threonine 800 is modified to Phosphothreonine. A phosphoserine mark is found at serine 810, serine 816, serine 820, and serine 835. Lysine 980 bears the N6-acetyllysine mark.

This sequence belongs to the ubiquitin-activating E1 family. In terms of assembly, monomer. Interacts with GAN (via BTB domain). Post-translationally, ISGylated. In terms of tissue distribution, ubiquitously expressed. In testis, expressed in A spermatogonia and spermatids but at very low levels in pachytene spermatocytes.

It is found in the cytoplasm. It localises to the mitochondrion. The protein localises to the nucleus. The catalysed reaction is ATP + ubiquitin + [E1 ubiquitin-activating enzyme]-L-cysteine = AMP + diphosphate + S-ubiquitinyl-[E1 ubiquitin-activating enzyme]-L-cysteine.. Its pathway is protein modification; protein ubiquitination. Its function is as follows. Catalyzes the first step in ubiquitin conjugation to mark cellular proteins for degradation through the ubiquitin-proteasome system. Activates ubiquitin by first adenylating its C-terminal glycine residue with ATP, and thereafter linking this residue to the side chain of a cysteine residue in E1, yielding a ubiquitin-E1 thioester and free AMP. Essential for the formation of radiation-induced foci, timely DNA repair and for response to replication stress. Promotes the recruitment of TP53BP1 and BRCA1 at DNA damage sites. This is Ubiquitin-like modifier-activating enzyme 1 (Uba1) from Mus musculus (Mouse).